The chain runs to 478 residues: GMP reductase (478 aa).

2 CBS domains span residues 95-152 and 153-211; these read VVDT…VRDI and ALSD…AVDA. NADP(+)-binding positions include 245-247 and 295-297; these read DTA and GVG. The Thioimidate intermediate role is filled by cysteine 302.

The protein belongs to the IMPDH/GMPR family. GuaB1 subfamily. As to quaternary structure, homooctamer composed of two tetramers. The oligomerization state is regulated by ligands and pH. Requires a monovalent cation as cofactor.

The catalysed reaction is IMP + NH4(+) + NADP(+) = GMP + NADPH + 2 H(+). Its pathway is purine metabolism; IMP biosynthesis via salvage pathway. With respect to regulation, activity is allosterically regulated by the ATP/GTP ratio in a pH-dependent manner. At pH 7.8, GTP has only a minor positive effect and ATP only a minor negative effect on the activity, however, at lower pH values, the effects of ATP and GTP increase. ATP-dependent inhibition can be restored by increasing GTP concentration. IMP and XMP are competitive inhibitors. Its function is as follows. Involved in the purine-salvage pathway. Catalyzes the NADPH-dependent conversion of GMP to IMP. Is not essential for viability, but may contribute to the regulation of the purine nucleotide pool by recycling GMP to IMP. The chain is GMP reductase from Mycolicibacterium smegmatis (strain ATCC 700084 / mc(2)155) (Mycobacterium smegmatis).